A 352-amino-acid chain; its full sequence is tRNA-specific 2-thiouridylase MnmA (352 aa).

ATP contacts are provided by residues 7–14 (GLSGGVDS) and L33. C94 (nucleophile) is an active-site residue. C94 and C193 are joined by a disulfide. G119 provides a ligand contact to ATP. Residues 143–145 (KDQ) are interaction with tRNA. Catalysis depends on C193, which acts as the Cysteine persulfide intermediate. Residues 298 to 299 (RY) are interaction with tRNA.

This sequence belongs to the MnmA/TRMU family.

It is found in the cytoplasm. The catalysed reaction is S-sulfanyl-L-cysteinyl-[protein] + uridine(34) in tRNA + AH2 + ATP = 2-thiouridine(34) in tRNA + L-cysteinyl-[protein] + A + AMP + diphosphate + H(+). Its function is as follows. Catalyzes the 2-thiolation of uridine at the wobble position (U34) of tRNA, leading to the formation of s(2)U34. This chain is tRNA-specific 2-thiouridylase MnmA, found in Microcystis aeruginosa (strain NIES-843 / IAM M-2473).